The primary structure comprises 561 residues: Dihydroxy-acid dehydratase (561 aa).

A [2Fe-2S] cluster-binding site is contributed by C50. Residue D82 participates in Mg(2+) binding. C123 lines the [2Fe-2S] cluster pocket. The Mg(2+) site is built by D124 and K125. K125 is subject to N6-carboxylysine. C195 lines the [2Fe-2S] cluster pocket. Residue E447 participates in Mg(2+) binding. S473 serves as the catalytic Proton acceptor.

Belongs to the IlvD/Edd family. Homodimer. Requires [2Fe-2S] cluster as cofactor. Mg(2+) serves as cofactor.

It catalyses the reaction (2R)-2,3-dihydroxy-3-methylbutanoate = 3-methyl-2-oxobutanoate + H2O. It carries out the reaction (2R,3R)-2,3-dihydroxy-3-methylpentanoate = (S)-3-methyl-2-oxopentanoate + H2O. It participates in amino-acid biosynthesis; L-isoleucine biosynthesis; L-isoleucine from 2-oxobutanoate: step 3/4. It functions in the pathway amino-acid biosynthesis; L-valine biosynthesis; L-valine from pyruvate: step 3/4. Functionally, functions in the biosynthesis of branched-chain amino acids. Catalyzes the dehydration of (2R,3R)-2,3-dihydroxy-3-methylpentanoate (2,3-dihydroxy-3-methylvalerate) into 2-oxo-3-methylpentanoate (2-oxo-3-methylvalerate) and of (2R)-2,3-dihydroxy-3-methylbutanoate (2,3-dihydroxyisovalerate) into 2-oxo-3-methylbutanoate (2-oxoisovalerate), the penultimate precursor to L-isoleucine and L-valine, respectively. This chain is Dihydroxy-acid dehydratase, found in Trichodesmium erythraeum (strain IMS101).